The sequence spans 88 residues: U2-ctenitoxin-Pn1a (88 aa).

The signal sequence occupies residues 1–17; sequence MKVAILILSILVLAVAS. The propeptide occupies 18-34; it reads ETIEEYRDDFAVEELER. Intrachain disulfides connect cysteine 37-cysteine 51, cysteine 44-cysteine 57, cysteine 48-cysteine 86, cysteine 50-cysteine 71, and cysteine 59-cysteine 69. Residue lysine 88 is a propeptide.

Expressed by the venom gland.

It localises to the secreted. Inhibits voltage-gated sodium channels (Nav). Causes scratching, lacrimation, hypersalivation, sweating and agitation followed by spastic paralysis of the anterior and posterior extremities and death at dose levels of 1.62 mg/mouse. Insecticidal to the larval and adult forms of the house fly. The chain is U2-ctenitoxin-Pn1a from Phoneutria nigriventer (Brazilian armed spider).